Here is a 790-residue protein sequence, read N- to C-terminus: Cadherin-6 (790 aa).

Residues 1–18 (MRTYRYFLLLFWVGQPYP) form the signal peptide. Positions 19 to 53 (TFSNPLSKRTSGFPAKRKALELSANSRNELSRSKR) are excised as a propeptide. Cadherin domains lie at 54–159 (SWMW…EPIF), 160–268 (TKDV…PPRF), 269–383 (PQST…PPVF), 384–486 (SKLA…DNAP), and 487–608 (EFAE…LIHP). Over 54–615 (SWMWNQFFLL…IHPTGLSTGA (562 aa)) the chain is Extracellular. Asparagine 255 carries N-linked (GlcNAc...) asparagine glycosylation. The interval 260 to 291 (DVNDNPPRFPQSTYQFKTPESSPPGTPIGRIK) is disordered. Residues 269-279 (PQSTYQFKTPE) show a composition bias toward polar residues. Asparagine 399, asparagine 437, asparagine 455, and asparagine 536 each carry an N-linked (GlcNAc...) asparagine glycan. The helical transmembrane segment at 616–636 (LVAILLCIVILLVTVVLFAAL) threads the bilayer. Residues 637–790 (RRQRKKEPLI…YGGMDSDKDS (154 aa)) lie on the Cytoplasmic side of the membrane. 2 positions are modified to phosphoserine: serine 786 and serine 790.

It is found in the cell membrane. Functionally, cadherins are calcium-dependent cell adhesion proteins. They preferentially interact with themselves in a homophilic manner in connecting cells; cadherins may thus contribute to the sorting of heterogeneous cell types. This Mus musculus (Mouse) protein is Cadherin-6 (Cdh6).